Reading from the N-terminus, the 245-residue chain is 1-(5-phosphoribosyl)-5-[(5-phosphoribosylamino)methylideneamino] imidazole-4-carboxamide isomerase (245 aa).

The Proton acceptor role is filled by Asp11. The active-site Proton donor is the Asp132.

The protein belongs to the HisA/HisF family.

It is found in the cytoplasm. The catalysed reaction is 1-(5-phospho-beta-D-ribosyl)-5-[(5-phospho-beta-D-ribosylamino)methylideneamino]imidazole-4-carboxamide = 5-[(5-phospho-1-deoxy-D-ribulos-1-ylimino)methylamino]-1-(5-phospho-beta-D-ribosyl)imidazole-4-carboxamide. The protein operates within amino-acid biosynthesis; L-histidine biosynthesis; L-histidine from 5-phospho-alpha-D-ribose 1-diphosphate: step 4/9. The sequence is that of 1-(5-phosphoribosyl)-5-[(5-phosphoribosylamino)methylideneamino] imidazole-4-carboxamide isomerase from Geobacillus kaustophilus (strain HTA426).